Consider the following 430-residue polypeptide: Xaa-Pro aminopeptidase (430 aa).

The Mn(2+) site is built by aspartate 254, aspartate 265, histidine 348, glutamate 377, and glutamate 400.

It belongs to the peptidase M24B family. Homotetramer. Requires Mn(2+) as cofactor.

The enzyme catalyses Release of any N-terminal amino acid, including proline, that is linked to proline, even from a dipeptide or tripeptide.. In Haemophilus influenzae (strain ATCC 51907 / DSM 11121 / KW20 / Rd), this protein is Xaa-Pro aminopeptidase (pepP).